Consider the following 105-residue polypeptide: Small ribosomal subunit protein uS10 (105 aa).

Belongs to the universal ribosomal protein uS10 family. As to quaternary structure, part of the 30S ribosomal subunit.

Functionally, involved in the binding of tRNA to the ribosomes. This Rickettsia canadensis (strain McKiel) protein is Small ribosomal subunit protein uS10.